The following is a 514-amino-acid chain: Protein Tube (514 aa).

5 disordered regions span residues 226 to 250 (VPQQ…RSSR), 255 to 274 (TASN…SNTA), 324 to 343 (LDAG…STST), 366 to 385 (ASDA…VPDM), and 413 to 514 (NGAK…ELQQ). Over residues 259–274 (VAPTTASNAPSASNTA) the composition is skewed to low complexity. Residues 422–433 (ADNNSSGTNSLS) are compositionally biased toward polar residues. Residues 434–460 (NDDDEQKEDDDDDDDDDVVDVDDEEAD) show a composition bias toward acidic residues. A compositionally biased stretch (polar residues) spans 477–514 (TTVTCTSGENSFEFTNDSSSASNDDYTNNIPNLSELQQ).

As to expression, maternal and zygotic gene product.

The protein resides in the cytoplasm. Its function is as follows. Required for the determination of embryonic dorsoventral polarity. Is involved in transduction of information regulating nuclear import of dorsal protein. The protein is Protein Tube (tub) of Drosophila virilis (Fruit fly).